Here is a 484-residue protein sequence, read N- to C-terminus: 1,4-beta-D-glucan cellobiohydrolase CEL6A (484 aa).

Positions 1 to 17 are cleaved as a signal peptide; sequence MAKRLLLTAALAATTLA. The CBM1 domain maps to 26-62; that stretch reads NCGSVWSQCGGQGWTGATCCASGSTCVAQNQWYSQCL. 2 disulfide bridges follow: cysteine 34-cysteine 51 and cysteine 45-cysteine 61. Residues 68-98 form a disordered region; the sequence is TTTAQAPSSTRTTTSSSSRPTSSSISTSAVN. Tryptophan 171 and aspartate 173 together coordinate substrate. An N-linked (GlcNAc...) asparagine glycan is attached at asparagine 175. Positions 208–230 are substrate binding loop 1; that stretch reads YDLPDRDCAAAASNGEWAIADGG. The active-site Proton donor is aspartate 260. Positions 305, 308, 344, 405, 433, and 437 each coordinate substrate. Residues 431–469 form a substrate binding loop 2 region; sequence WIKPGGECDGTSDTTAARYDHHCGFADALKPAPEAGQWF. Residue aspartate 439 is the Proton acceptor of the active site.

It belongs to the glycosyl hydrolase 6 (cellulase B) family. Monomer. Both N- and O-glycosylated.

Its subcellular location is the secreted. It carries out the reaction Hydrolysis of (1-&gt;4)-beta-D-glucosidic linkages in cellulose and cellotetraose, releasing cellobiose from the non-reducing ends of the chains.. Its function is as follows. Exoglucanase that plays an important function in biomass degradation by catalyzing the hydrolysis of the non-reducing end beta-1,4-glucosidic linkages in cellulose and cellotetraose to release cellobiose. Hydrolyzes crystalline and amorphous cellulose but is inactive on hydroxyethyl cellulose, mannan, galactomannan, xyloglucan, arabinoxylan, arabinan, xylan, and pectin. This Podospora anserina (strain S / ATCC MYA-4624 / DSM 980 / FGSC 10383) (Pleurage anserina) protein is 1,4-beta-D-glucan cellobiohydrolase CEL6A.